A 204-amino-acid polypeptide reads, in one-letter code: Oocyte-specific homeobox protein 1 (204 aa).

The segment at Glu-28 to Gly-73 is disordered. Polar residues-rich tracts occupy residues Met-37–Ser-54 and Lys-62–Ser-72. The homeobox DNA-binding region spans Phe-94–Asn-153.

It belongs to the paired homeobox family. Obox subfamily. Specifically expressed in oocytes and early embryos.

The protein resides in the nucleus. Its function is as follows. Transcription factor required for zygotic genome activation (ZGA), a critical event in early embryonic development during which the developmental control passes from maternally provided mRNAs to the expression of the zygotic genome after fertilization. Together with other Obox family members, required in early two-cell stage embryos to kick-start the major ZGA wave by facilitating RNA Polymerase II 'pre-configuration', during which RNA Polymerase II relocates from the initial one-cell stage binding targets to ZGA gene promoters and distal enhancers. Mechanistically, promotes recruitment of RNA Polymerase II from (CG-rich) non-ZGA genes to (CG-poor) ZGA genes at the two-cell stage. Binds to regulatory DNA sequences containing a 5'-ACNCCTTTAATCCCAG-3' sequence motif. Most maternal and zygotic Obox family proteins can compensate for one another. In addition to its role in ZGA, promotes embryonic stem cell pluripotency. The sequence is that of Oocyte-specific homeobox protein 1 from Mus musculus (Mouse).